Reading from the N-terminus, the 163-residue chain is Nucleotide-binding protein Pnap_1080 (163 aa).

It belongs to the YajQ family.

Nucleotide-binding protein. The polypeptide is Nucleotide-binding protein Pnap_1080 (Polaromonas naphthalenivorans (strain CJ2)).